Consider the following 93-residue polypeptide: Cytochrome c oxidase polypeptide 6, mitochondrial (93 aa).

Topologically, residues 2–33 (STGNESYNLRYPKGFKGYPYNMYKLEGYGTPK) are mitochondrial matrix. A helical membrane pass occupies residues 34 to 53 (GYITLIGVVATLTVSGLFFA). Residues 54-93 (KTRSNKREYPTHNKEWRAKTLAYAKETNADPIYQLPKDKI) lie on the Mitochondrial intermembrane side of the membrane.

The protein belongs to the cytochrome c oxidase IV family. Component of the cytochrome c oxidase (complex IV, CIV), a multisubunit enzyme composed of a catalytic core of 3 subunits and seevral supernumerary subunits. The complex exists as a monomer or a dimer and forms supercomplexes (SCs) in the inner mitochondrial membrane with ubiquinol-cytochrome c oxidoreductase (cytochrome b-c1 complex, complex III, CIII).

It is found in the mitochondrion inner membrane. The protein operates within energy metabolism; oxidative phosphorylation. Its function is as follows. Component of the cytochrome c oxidase, the last enzyme in the mitochondrial electron transport chain which drives oxidative phosphorylation. The respiratory chain contains 3 multisubunit complexes succinate dehydrogenase (complex II, CII), ubiquinol-cytochrome c oxidoreductase (cytochrome b-c1 complex, complex III, CIII) and cytochrome c oxidase (complex IV, CIV), that cooperate to transfer electrons derived from NADH and succinate to molecular oxygen, creating an electrochemical gradient over the inner membrane that drives transmembrane transport and the ATP synthase. Cytochrome c oxidase is the component of the respiratory chain that catalyzes the reduction of oxygen to water. Electrons originating from reduced cytochrome c in the intermembrane space (IMS) are transferred via the dinuclear copper A center (CU(A)) of subunit 2 and heme A of subunit 1 to the active site in subunit 1, a binuclear center (BNC) formed by heme A3 and copper B (CU(B)). The BNC reduces molecular oxygen to 2 water molecules using 4 electrons from cytochrome c in the IMS and 4 protons from the mitochondrial matrix. This is Cytochrome c oxidase polypeptide 6, mitochondrial (cxfA) from Dictyostelium discoideum (Social amoeba).